The sequence spans 426 residues: Cell adhesion molecule CEACAM16 (426 aa).

The N-terminal stretch at 1–22 is a signal peptide; it reads MKMPLTWYSWFLLSAWILNTGA. Asparagine 38 carries N-linked (GlcNAc...) asparagine glycosylation. The interval 77-96 is disordered; the sequence is ETPGPAHTGREAVRPDGSLD. Residues 84 to 95 are compositionally biased toward basic and acidic residues; that stretch reads TGREAVRPDGSL. Ig-like C2-type domains are found at residues 134–219 and 224–310; these read PPTV…LNLT and PERV…ASVV. Cysteine 155 and cysteine 202 are oxidised to a cystine. Asparagine 217 is a glycosylation site (N-linked (GlcNAc...) asparagine). Cysteines 253 and 294 form a disulfide.

It belongs to the immunoglobulin superfamily. CEA family. Homooligomer; can for homodimers and homotetramers. Interacts with TECTA and TECTB. Expressed in cochlear outer hair cells (OHC).

It is found in the secreted. Its function is as follows. Required for proper hearing, plays a role in maintaining the integrity of the tectorial membrane. The polypeptide is Cell adhesion molecule CEACAM16 (Mus musculus (Mouse)).